The following is a 300-amino-acid chain: NAD kinase (300 aa).

Asp-75 acts as the Proton acceptor in catalysis. Residues 75–76 (DG), 149–150 (ND), Arg-177, Asp-179, 190–195 (TAYALS), Ala-214, and Gln-248 contribute to the NAD(+) site.

It belongs to the NAD kinase family. Requires a divalent metal cation as cofactor.

The protein localises to the cytoplasm. It carries out the reaction NAD(+) + ATP = ADP + NADP(+) + H(+). Involved in the regulation of the intracellular balance of NAD and NADP, and is a key enzyme in the biosynthesis of NADP. Catalyzes specifically the phosphorylation on 2'-hydroxyl of the adenosine moiety of NAD to yield NADP. In Burkholderia lata (strain ATCC 17760 / DSM 23089 / LMG 22485 / NCIMB 9086 / R18194 / 383), this protein is NAD kinase.